The following is a 440-amino-acid chain: IAA-amino acid hydrolase ILR1-like 4 (440 aa).

Positions 1 to 23 are cleaved as a signal peptide; sequence MSFFKWVSFVLILHLLNPTLISC. Mn(2+) is bound by residues Cys134, His136, Glu170, His194, and His397. A Prevents secretion from ER motif is present at residues 437 to 440; the sequence is KDEL.

It belongs to the peptidase M20 family. Requires Mn(2+) as cofactor. As to expression, expressed in leaves, stems, roots, siliques and flowers. Detected in the vascular tissue of cotyledons and roots, in adult leaves, stems, siliques, petals, hydathodes and in silique abscission zones and funicles.

The protein resides in the endoplasmic reticulum lumen. It catalyses the reaction a jasmonyl-L-amino acid + H2O = a jasmonate + an L-alpha-amino acid. In terms of biological role, hydrolyzes certain amino acid conjugates of the plant growth regulator indole-3-acetic acid (IAA), including IAA-Ala, IAA-Asn, IAA-Cys, IAA-Glu, IAA-Met, IAA-Ser and IAA-Gly. Has a lower efficiency with IAA-Phe, IAA-Leu and IAA-Val and no activity with IAA-Ile. Important for IAA-Leu hydrolysis in roots. Also hydrolyzes amino acid conjugates of jasmonic acid and 12-hydroxy jasmonic acid. The sequence is that of IAA-amino acid hydrolase ILR1-like 4 from Arabidopsis thaliana (Mouse-ear cress).